The sequence spans 288 residues: Urease accessory protein UreD (288 aa).

This sequence belongs to the UreD family. In terms of assembly, ureD, UreF and UreG form a complex that acts as a GTP-hydrolysis-dependent molecular chaperone, activating the urease apoprotein by helping to assemble the nickel containing metallocenter of UreC. The UreE protein probably delivers the nickel.

The protein resides in the cytoplasm. Its function is as follows. Required for maturation of urease via the functional incorporation of the urease nickel metallocenter. This Dechloromonas aromatica (strain RCB) protein is Urease accessory protein UreD.